A 556-amino-acid chain; its full sequence is 2-succinyl-5-enolpyruvyl-6-hydroxy-3-cyclohexene-1-carboxylate synthase (556 aa).

Belongs to the TPP enzyme family. MenD subfamily. As to quaternary structure, homodimer. Mg(2+) serves as cofactor. Mn(2+) is required as a cofactor. Requires thiamine diphosphate as cofactor.

It carries out the reaction isochorismate + 2-oxoglutarate + H(+) = 5-enolpyruvoyl-6-hydroxy-2-succinyl-cyclohex-3-ene-1-carboxylate + CO2. It participates in quinol/quinone metabolism; 1,4-dihydroxy-2-naphthoate biosynthesis; 1,4-dihydroxy-2-naphthoate from chorismate: step 2/7. It functions in the pathway quinol/quinone metabolism; menaquinone biosynthesis. In terms of biological role, catalyzes the thiamine diphosphate-dependent decarboxylation of 2-oxoglutarate and the subsequent addition of the resulting succinic semialdehyde-thiamine pyrophosphate anion to isochorismate to yield 2-succinyl-5-enolpyruvyl-6-hydroxy-3-cyclohexene-1-carboxylate (SEPHCHC). This Enterobacter sp. (strain 638) protein is 2-succinyl-5-enolpyruvyl-6-hydroxy-3-cyclohexene-1-carboxylate synthase.